The following is a 137-amino-acid chain: Basic phospholipase A2 homolog Bsc-K49 (137 aa).

The signal sequence occupies residues 1–16; sequence MRTLWIVAVLLVGVEG. Cystine bridges form between C42–C131, C44–C60, C59–C111, C65–C137, C66–C104, C73–C97, and C91–C102. The interval 121–133 is important for membrane-damaging activities in eukaryotes and bacteria; heparin-binding; sequence KNYKITMKMFCKK.

Belongs to the phospholipase A2 family. Group II subfamily. K49 sub-subfamily. In terms of assembly, homodimer; non-covalently linked. As to expression, expressed by the venom gland.

The protein resides in the secreted. In terms of biological role, snake venom phospholipase A2 that lacks enzymatic activity. Is myotoxic, and displays edema-inducing activities. A model of myotoxic mechanism has been proposed: an apo Lys49-PLA2 is activated by the entrance of a hydrophobic molecule (e.g. fatty acid) at the hydrophobic channel of the protein leading to a reorientation of a monomer. This reorientation causes a transition between 'inactive' to 'active' states, causing alignment of C-terminal and membrane-docking sites (MDoS) side-by-side and putting the membrane-disruption sites (MDiS) in the same plane, exposed to solvent and in a symmetric position for both monomers. The MDoS region stabilizes the toxin on membrane by the interaction of charged residues with phospholipid head groups. Subsequently, the MDiS region destabilizes the membrane with penetration of hydrophobic residues. This insertion causes a disorganization of the membrane, allowing an uncontrolled influx of ions (i.e. calcium and sodium), and eventually triggering irreversible intracellular alterations and cell death. The protein is Basic phospholipase A2 homolog Bsc-K49 of Bothriechis schlegelii (Eyelash palm pitviper).